The sequence spans 165 residues: Chorismate pyruvate-lyase (165 aa).

Residues Met-35, Arg-77, Leu-115, and Glu-156 each contribute to the substrate site.

Belongs to the UbiC family. In terms of assembly, monomer.

It localises to the cytoplasm. The catalysed reaction is chorismate = 4-hydroxybenzoate + pyruvate. Its pathway is cofactor biosynthesis; ubiquinone biosynthesis. Functionally, removes the pyruvyl group from chorismate, with concomitant aromatization of the ring, to provide 4-hydroxybenzoate (4HB) for the ubiquinone pathway. The sequence is that of Chorismate pyruvate-lyase from Salmonella enteritidis PT4 (strain P125109).